We begin with the raw amino-acid sequence, 363 residues long: MAANFWESTQRRNWLFTKEELAARRQQLENEDPSLVTMYPLPEWRHLYNYFNYQMLRLAKNLSIRQQAIATAQVYMKRFYTRVEIRSTNPTLVLVTAVYLACKMEEMPLHIRNVSLEAKKVWPMETPSLEIAKIGECEFWLISEMSAQLIVHQPYRTLTALQQDFQLANDDHVLAVSFLNDHFMTDLPLLYAPHTIALAAIMLALVLRLSKASSSNNAAAGQQGGAQAGPLGITLASGLSMFQQAVAAKAMTPGGSGSPAMSSPIQQNPPNQAYQLTPQQQEMFRQQQMQQQNRQPETQAKDSPQKEKSKLQRFAAWLSESGVDIEAMIDCTQELIAFYECQESYNEQITRDQINRFVKARGL.

A Cyclin N-terminal domain is found at 53 to 143; the sequence is YQMLRLAKNL…IGECEFWLIS (91 aa). The tract at residues 252 to 312 is disordered; that stretch reads TPGGSGSPAM…SPQKEKSKLQ (61 aa). Positions 265–276 are enriched in polar residues; the sequence is IQQNPPNQAYQL. Residues 277-298 show a composition bias toward low complexity; the sequence is TPQQQEMFRQQQMQQQNRQPET. Basic and acidic residues predominate over residues 299 to 310; it reads QAKDSPQKEKSK.

The protein belongs to the cyclin family. Cyclin C subfamily. Component of the SRB8-11 complex, a regulatory module of the Mediator complex.

It localises to the nucleus. Its function is as follows. Component of the SRB8-11 complex. The SRB8-11 complex is a regulatory module of the Mediator complex which is itself involved in regulation of basal and activated RNA polymerase II-dependent transcription. The SRB8-11 complex may be involved in the transcriptional repression of a subset of genes regulated by Mediator. It may inhibit the association of the Mediator complex with RNA polymerase II to form the holoenzyme complex. The SRB8-11 complex phosphorylates the C-terminal domain (CTD) of the largest subunit of RNA polymerase II. The polypeptide is RNA polymerase II holoenzyme cyclin-like subunit (SSN8) (Pyricularia oryzae (strain 70-15 / ATCC MYA-4617 / FGSC 8958) (Rice blast fungus)).